Here is a 452-residue protein sequence, read N- to C-terminus: Maltoporin (452 aa).

Positions 1–25 are cleaved as a signal peptide; it reads MMITLRKLPLAVAVAAGVMSAQAMA.

It belongs to the porin LamB (TC 1.B.3) family. Homotrimer formed of three 18-stranded antiparallel beta-barrels, containing three independent channels.

It localises to the cell outer membrane. The catalysed reaction is beta-maltose(in) = beta-maltose(out). Its function is as follows. Involved in the transport of maltose and maltodextrins. In Salmonella paratyphi A (strain ATCC 9150 / SARB42), this protein is Maltoporin.